A 127-amino-acid chain; its full sequence is Small ribosomal subunit protein uS11 (127 aa).

The protein belongs to the universal ribosomal protein uS11 family. Part of the 30S ribosomal subunit. Interacts with proteins S7 and S18. Binds to IF-3.

In terms of biological role, located on the platform of the 30S subunit, it bridges several disparate RNA helices of the 16S rRNA. Forms part of the Shine-Dalgarno cleft in the 70S ribosome. The protein is Small ribosomal subunit protein uS11 of Anaeromyxobacter dehalogenans (strain 2CP-C).